The primary structure comprises 247 residues: Geranylgeranylglyceryl phosphate synthase (247 aa).

Mg(2+)-binding residues include D24 and S53. Sn-glycerol 1-phosphate is bound by residues 172–178 (YLEAGSG), 203–204 (GG), and 225–226 (GT).

The protein belongs to the GGGP/HepGP synthase family. Group II subfamily. The cofactor is Mg(2+).

Its subcellular location is the cytoplasm. The catalysed reaction is sn-glycerol 1-phosphate + (2E,6E,10E)-geranylgeranyl diphosphate = sn-3-O-(geranylgeranyl)glycerol 1-phosphate + diphosphate. Its pathway is membrane lipid metabolism; glycerophospholipid metabolism. Its function is as follows. Prenyltransferase that catalyzes the transfer of the geranylgeranyl moiety of geranylgeranyl diphosphate (GGPP) to the C3 hydroxyl of sn-glycerol-1-phosphate (G1P). This reaction is the first ether-bond-formation step in the biosynthesis of archaeal membrane lipids. The chain is Geranylgeranylglyceryl phosphate synthase from Cenarchaeum symbiosum (strain A).